A 58-amino-acid polypeptide reads, in one-letter code: Mastoparan-VT7 (58 aa).

A signal peptide spans 1-27; it reads MKNTILILFTAFIALLGFFGMSAEALA. AXPX repeat units follow at residues 27–30, 31–34, 35–38, and 41–44; these read ADPK, ADPL, AGPN, and ADPE. A propeptide spanning residues 28–45 is cleaved from the precursor; that stretch reads DPKADPLAGPNPDADPEA.

The protein belongs to the MCD family. Mastoparan subfamily. As to expression, expressed by the venom gland.

It localises to the secreted. In terms of biological role, the synthetic peptide shows antimicrobial activities against Gram-negative bacteria (but not against all strains tested), Gram-positive bacteria (all strains tested) and the fungi C.albicans (but not C.parapsilosis). Exhibits little hemolytic activity against washed human erythrocytes. The sequence is that of Mastoparan-VT7 from Vespa tropica (Greater banded hornet).